Consider the following 850-residue polypeptide: PH domain-containing protein YHR131C (850 aa).

The PH domain maps to 194-306; the sequence is RIHSDLVHRS…MYLSIGISVS (113 aa). Residues 324-338 show a composition bias toward basic residues; the sequence is RRRRRRRRRRRRHTH. Disordered stretches follow at residues 324 to 348, 406 to 428, 451 to 494, 583 to 659, and 793 to 850; these read RRRRRRRRRRRRHTHRSESSMGSFS, SAASGESSDNSTLGSTRSLSGCS, SSRT…GVPV, EASI…TDDS, and TTKD…QITA. A compositionally biased stretch (low complexity) spans 406 to 416; sequence SAASGESSDNS. Positions 417–428 are enriched in polar residues; it reads TLGSTRSLSGCS. Residues 479–489 show a composition bias toward basic and acidic residues; sequence HHESSGGDHPE. A compositionally biased stretch (polar residues) spans 605-619; the sequence is ESATDLSQSSRSLCL. Composition is skewed to acidic residues over residues 626-658 and 799-850; these read INDDESATETDEDENDGETDEYAGDDTNDDTDD and DHGE…QITA.

Its subcellular location is the cytoplasm. This Saccharomyces cerevisiae (strain ATCC 204508 / S288c) (Baker's yeast) protein is PH domain-containing protein YHR131C.